A 183-amino-acid polypeptide reads, in one-letter code: Inner membrane-spanning protein YciB (183 aa).

Transmembrane regions (helical) follow at residues 22–44 (IYTATGALVVVTGLQLIYSWVRY), 54–74 (TFLLVGFFGGLTVFFHDDAFI), 76–96 (WKVTVINILFALGLLISRYGF), 119–139 (VNLAWVGFFTVCGLLNLYVAF), and 149–169 (FKVFGLLGMTLVFTLLSGVYL).

This sequence belongs to the YciB family.

The protein resides in the cell inner membrane. Functionally, plays a role in cell envelope biogenesis, maintenance of cell envelope integrity and membrane homeostasis. This chain is Inner membrane-spanning protein YciB, found in Aeromonas salmonicida (strain A449).